Here is a 315-residue protein sequence, read N- to C-terminus: Beta-ketoacyl-[acyl-carrier-protein] synthase III 2 (315 aa).

Catalysis depends on residues Cys113 and His241. The segment at 242 to 246 (QANLR) is ACP-binding. Asn271 is a catalytic residue.

It belongs to the thiolase-like superfamily. FabH family. In terms of assembly, homodimer.

It is found in the cytoplasm. The enzyme catalyses malonyl-[ACP] + acetyl-CoA + H(+) = 3-oxobutanoyl-[ACP] + CO2 + CoA. The protein operates within lipid metabolism; fatty acid biosynthesis. Catalyzes the condensation reaction of fatty acid synthesis by the addition to an acyl acceptor of two carbons from malonyl-ACP. Catalyzes the first condensation reaction which initiates fatty acid synthesis and may therefore play a role in governing the total rate of fatty acid production. Possesses both acetoacetyl-ACP synthase and acetyl transacylase activities. Its substrate specificity determines the biosynthesis of branched-chain and/or straight-chain of fatty acids. The sequence is that of Beta-ketoacyl-[acyl-carrier-protein] synthase III 2 from Streptomyces avermitilis (strain ATCC 31267 / DSM 46492 / JCM 5070 / NBRC 14893 / NCIMB 12804 / NRRL 8165 / MA-4680).